A 122-amino-acid polypeptide reads, in one-letter code: Large ribosomal subunit protein uL22 (122 aa).

A disordered region spans residues Val102 to Lys122.

The protein belongs to the universal ribosomal protein uL22 family. As to quaternary structure, part of the 50S ribosomal subunit.

Functionally, this protein binds specifically to 23S rRNA; its binding is stimulated by other ribosomal proteins, e.g. L4, L17, and L20. It is important during the early stages of 50S assembly. It makes multiple contacts with different domains of the 23S rRNA in the assembled 50S subunit and ribosome. In terms of biological role, the globular domain of the protein is located near the polypeptide exit tunnel on the outside of the subunit, while an extended beta-hairpin is found that lines the wall of the exit tunnel in the center of the 70S ribosome. This Helicobacter pylori (strain HPAG1) protein is Large ribosomal subunit protein uL22.